Reading from the N-terminus, the 153-residue chain is Methylglyoxal synthase (153 aa).

Positions 6 to 153 (RTIAARKHIA…QRYLAERLPS (148 aa)) constitute an MGS-like domain. Residues histidine 19, lysine 23, 45–48 (TGTT), and 65–66 (SG) each bind substrate. Catalysis depends on aspartate 71, which acts as the Proton donor/acceptor. Histidine 98 serves as a coordination point for substrate.

Belongs to the methylglyoxal synthase family.

The catalysed reaction is dihydroxyacetone phosphate = methylglyoxal + phosphate. Functionally, catalyzes the formation of methylglyoxal from dihydroxyacetone phosphate. The sequence is that of Methylglyoxal synthase from Sodalis glossinidius (strain morsitans).